Here is a 1222-residue protein sequence, read N- to C-terminus: ATP-dependent helicase/nuclease subunit A (1222 aa).

In terms of domain architecture, UvrD-like helicase ATP-binding spans 39–495 (QKRTAQQIEA…ILLKENFRSQ (457 aa)). 60 to 67 (ASAGSGKT) is a binding site for ATP. The UvrD-like helicase C-terminal domain maps to 524 to 810 (QLIAGSHAQT…NLMTIHKSKG (287 aa)).

This sequence belongs to the helicase family. AddA subfamily. As to quaternary structure, heterodimer of AddA and AddB/RexB. It depends on Mg(2+) as a cofactor.

It carries out the reaction Couples ATP hydrolysis with the unwinding of duplex DNA by translocating in the 3'-5' direction.. It catalyses the reaction ATP + H2O = ADP + phosphate + H(+). Its function is as follows. The heterodimer acts as both an ATP-dependent DNA helicase and an ATP-dependent, dual-direction single-stranded exonuclease. Recognizes the chi site generating a DNA molecule suitable for the initiation of homologous recombination. The AddA nuclease domain is required for chi fragment generation; this subunit has the helicase and 3' -&gt; 5' nuclease activities. In Streptococcus pyogenes serotype M12 (strain MGAS2096), this protein is ATP-dependent helicase/nuclease subunit A.